The sequence spans 294 residues: Aspartate carbamoyltransferase catalytic subunit (294 aa).

Carbamoyl phosphate contacts are provided by Arg49 and Thr50. Lys77 is an L-aspartate binding site. Carbamoyl phosphate is bound by residues Arg99, His127, and Gln130. L-aspartate contacts are provided by Arg161 and Arg211. Carbamoyl phosphate contacts are provided by Gly250 and Pro251.

Belongs to the aspartate/ornithine carbamoyltransferase superfamily. ATCase family. Heterododecamer (2C3:3R2) of six catalytic PyrB chains organized as two trimers (C3), and six regulatory PyrI chains organized as three dimers (R2).

The catalysed reaction is carbamoyl phosphate + L-aspartate = N-carbamoyl-L-aspartate + phosphate + H(+). Its pathway is pyrimidine metabolism; UMP biosynthesis via de novo pathway; (S)-dihydroorotate from bicarbonate: step 2/3. Functionally, catalyzes the condensation of carbamoyl phosphate and aspartate to form carbamoyl aspartate and inorganic phosphate, the committed step in the de novo pyrimidine nucleotide biosynthesis pathway. In Sulfurovum sp. (strain NBC37-1), this protein is Aspartate carbamoyltransferase catalytic subunit.